Here is a 360-residue protein sequence, read N- to C-terminus: Ribosomal RNA large subunit methyltransferase F (360 aa).

The disordered stretch occupies residues 1 to 36; the sequence is MSKLISKQGKRPALSQSGLAKPSTSKKSSASKNANT. Residues 23–36 are compositionally biased toward low complexity; the sequence is STSKKSSASKNANT.

This sequence belongs to the methyltransferase superfamily. METTL16/RlmF family.

It is found in the cytoplasm. It carries out the reaction adenosine(1618) in 23S rRNA + S-adenosyl-L-methionine = N(6)-methyladenosine(1618) in 23S rRNA + S-adenosyl-L-homocysteine + H(+). In terms of biological role, specifically methylates the adenine in position 1618 of 23S rRNA. In Shewanella denitrificans (strain OS217 / ATCC BAA-1090 / DSM 15013), this protein is Ribosomal RNA large subunit methyltransferase F.